We begin with the raw amino-acid sequence, 232 residues long: Large ribosomal subunit protein uL1 (232 aa).

This sequence belongs to the universal ribosomal protein uL1 family. As to quaternary structure, part of the 50S ribosomal subunit.

Binds directly to 23S rRNA. The L1 stalk is quite mobile in the ribosome, and is involved in E site tRNA release. In terms of biological role, protein L1 is also a translational repressor protein, it controls the translation of the L11 operon by binding to its mRNA. The protein is Large ribosomal subunit protein uL1 of Xanthomonas oryzae pv. oryzae (strain MAFF 311018).